Consider the following 177-residue polypeptide: Dual-action ribosomal maturation protein DarP (177 aa).

The interval 1 to 26 (MKIVGDSEHFKQPYDSDEEYVSKTED) is disordered.

Belongs to the DarP family.

Its subcellular location is the cytoplasm. Functionally, member of a network of 50S ribosomal subunit biogenesis factors which assembles along the 30S-50S interface, preventing incorrect 23S rRNA structures from forming. Promotes peptidyl transferase center (PTC) maturation. In Shewanella sp. (strain MR-4), this protein is Dual-action ribosomal maturation protein DarP.